Reading from the N-terminus, the 378-residue chain is Putative glutamate--cysteine ligase 2 (378 aa).

It belongs to the glutamate--cysteine ligase type 2 family. YbdK subfamily.

The enzyme catalyses L-cysteine + L-glutamate + ATP = gamma-L-glutamyl-L-cysteine + ADP + phosphate + H(+). In terms of biological role, ATP-dependent carboxylate-amine ligase which exhibits weak glutamate--cysteine ligase activity. The protein is Putative glutamate--cysteine ligase 2 of Salinispora tropica (strain ATCC BAA-916 / DSM 44818 / JCM 13857 / NBRC 105044 / CNB-440).